Consider the following 874-residue polypeptide: Pentatricopeptide repeat-containing protein At2g17140 (874 aa).

PPR repeat units lie at residues 111 to 145, 146 to 180, 181 to 215, 216 to 250, 251 to 285, 290 to 320, 325 to 359, 360 to 394, 395 to 429, 430 to 464, 465 to 499, 523 to 557, 558 to 592, 593 to 627, 628 to 662, 663 to 693, 697 to 731, 732 to 766, and 767 to 797; these read SVYL…GIAP, QTYT…GCKP, NEFT…GVLP, NKVI…GLVP, DIVT…EYLG, NSIT…IREN, SLQS…GIGP, SIYS…GVCP, DAVT…NCLP, NAYT…GYGL, DTVT…GSAA, DLIT…KLQP, DSVA…GCHK, SLET…GISP, NICT…NIAP, NVFS…AVSI, KEGL…GFEL, GTFL…GYGF, and DPAA…MMEM.

It belongs to the PPR family. P subfamily.

The sequence is that of Pentatricopeptide repeat-containing protein At2g17140 from Arabidopsis thaliana (Mouse-ear cress).